Here is a 393-residue protein sequence, read N- to C-terminus: Formate-dependent phosphoribosylglycinamide formyltransferase (393 aa).

N(1)-(5-phospho-beta-D-ribosyl)glycinamide contacts are provided by residues 15–16 and glutamate 75; that span reads EL. Residues arginine 107, lysine 148, 153 to 158, 188 to 191, and glutamate 196 contribute to the ATP site; these read SSGKGQ and EEYI. Positions 112–302 constitute an ATP-grasp domain; it reads NLAAEKLAIK…EFELHLRAIL (191 aa). The Mg(2+) site is built by glutamate 261 and glutamate 273. N(1)-(5-phospho-beta-D-ribosyl)glycinamide contacts are provided by residues aspartate 280, lysine 350, and 357 to 358; that span reads RR.

It belongs to the PurK/PurT family. Homodimer.

The enzyme catalyses N(1)-(5-phospho-beta-D-ribosyl)glycinamide + formate + ATP = N(2)-formyl-N(1)-(5-phospho-beta-D-ribosyl)glycinamide + ADP + phosphate + H(+). It functions in the pathway purine metabolism; IMP biosynthesis via de novo pathway; N(2)-formyl-N(1)-(5-phospho-D-ribosyl)glycinamide from N(1)-(5-phospho-D-ribosyl)glycinamide (formate route): step 1/1. In terms of biological role, involved in the de novo purine biosynthesis. Catalyzes the transfer of formate to 5-phospho-ribosyl-glycinamide (GAR), producing 5-phospho-ribosyl-N-formylglycinamide (FGAR). Formate is provided by PurU via hydrolysis of 10-formyl-tetrahydrofolate. This is Formate-dependent phosphoribosylglycinamide formyltransferase from Prochlorococcus marinus (strain SARG / CCMP1375 / SS120).